A 392-amino-acid chain; its full sequence is Probable tRNA sulfurtransferase (392 aa).

Residues Asp59–Val166 form the THUMP domain. ATP-binding positions include Leu183–Leu184, His208–Phe209, Arg265, Gly287, and Gln296.

It belongs to the ThiI family.

It localises to the cytoplasm. The catalysed reaction is [ThiI sulfur-carrier protein]-S-sulfanyl-L-cysteine + a uridine in tRNA + 2 reduced [2Fe-2S]-[ferredoxin] + ATP + H(+) = [ThiI sulfur-carrier protein]-L-cysteine + a 4-thiouridine in tRNA + 2 oxidized [2Fe-2S]-[ferredoxin] + AMP + diphosphate. It catalyses the reaction [ThiS sulfur-carrier protein]-C-terminal Gly-Gly-AMP + S-sulfanyl-L-cysteinyl-[cysteine desulfurase] + AH2 = [ThiS sulfur-carrier protein]-C-terminal-Gly-aminoethanethioate + L-cysteinyl-[cysteine desulfurase] + A + AMP + 2 H(+). It participates in cofactor biosynthesis; thiamine diphosphate biosynthesis. Its function is as follows. Catalyzes the ATP-dependent transfer of a sulfur to tRNA to produce 4-thiouridine in position 8 of tRNAs, which functions as a near-UV photosensor. Also catalyzes the transfer of sulfur to the sulfur carrier protein ThiS, forming ThiS-thiocarboxylate. This is a step in the synthesis of thiazole, in the thiamine biosynthesis pathway. The sulfur is donated as persulfide by IscS. This chain is Probable tRNA sulfurtransferase, found in Alkaliphilus metalliredigens (strain QYMF).